A 503-amino-acid chain; its full sequence is Probable cytosol aminopeptidase (503 aa).

The Mn(2+) site is built by Lys-272 and Asp-277. Lys-284 is a catalytic residue. Positions 295, 354, and 356 each coordinate Mn(2+). Residue Arg-358 is part of the active site.

This sequence belongs to the peptidase M17 family. Requires Mn(2+) as cofactor.

Its subcellular location is the cytoplasm. It catalyses the reaction Release of an N-terminal amino acid, Xaa-|-Yaa-, in which Xaa is preferably Leu, but may be other amino acids including Pro although not Arg or Lys, and Yaa may be Pro. Amino acid amides and methyl esters are also readily hydrolyzed, but rates on arylamides are exceedingly low.. It carries out the reaction Release of an N-terminal amino acid, preferentially leucine, but not glutamic or aspartic acids.. Functionally, presumably involved in the processing and regular turnover of intracellular proteins. Catalyzes the removal of unsubstituted N-terminal amino acids from various peptides. This is Probable cytosol aminopeptidase from Chlorobium limicola (strain DSM 245 / NBRC 103803 / 6330).